A 161-amino-acid chain; its full sequence is Peptidyl-prolyl cis-trans isomerase-like 3 (161 aa).

The residue at position 2 (serine 2) is an N-acetylserine. Positions 2 to 154 constitute a PPIase cyclophilin-type domain; the sequence is SVTLHTDVGD…NDVHIKDITI (153 aa). Arginine 61 bears the Omega-N-methylarginine mark.

This sequence belongs to the cyclophilin-type PPIase family. PPIL3 subfamily. Identified in the spliceosome C complex.

The catalysed reaction is [protein]-peptidylproline (omega=180) = [protein]-peptidylproline (omega=0). PPIases accelerate the folding of proteins. It catalyzes the cis-trans isomerization of proline imidic peptide bonds in oligopeptides. May be involved in pre-mRNA splicing. The polypeptide is Peptidyl-prolyl cis-trans isomerase-like 3 (Ppil3) (Mus musculus (Mouse)).